Here is a 163-residue protein sequence, read N- to C-terminus: Single-stranded DNA-binding protein 1 (163 aa).

The SSB domain maps to 1 to 104 (MINNVVLVGR…VVAESFQLLE (104 aa)). Positions 106 to 163 (RATREGGSPNSYNNGGYNNAPSNNSYSASSQQTPNFSRDESPFGNSNPMDISDDDLPF) are disordered. The segment covering 111 to 135 (GGSPNSYNNGGYNNAPSNNSYSASS) has biased composition (low complexity). An Important for interaction with partner proteins motif is present at residues 158-163 (DDDLPF).

Homotetramer.

Its function is as follows. Plays an important role in DNA replication, recombination and repair. Binds to ssDNA and to an array of partner proteins to recruit them to their sites of action during DNA metabolism. The polypeptide is Single-stranded DNA-binding protein 1 (ssb1) (Streptococcus agalactiae serotype III (strain NEM316)).